Consider the following 238-residue polypeptide: Small ribosomal subunit protein uS2 (238 aa).

Belongs to the universal ribosomal protein uS2 family.

The sequence is that of Small ribosomal subunit protein uS2 from Moorella thermoacetica (strain ATCC 39073 / JCM 9320).